A 261-amino-acid chain; its full sequence is Short-chain dehydrogenase/reductase ARMGADRAFT_1018421 (261 aa).

The NADP(+) site is built by Ile21, Asp68, Asn95, Lys128, Tyr161, Lys165, Val194, and Thr196. The active-site Proton acceptor is the Tyr161. The Lowers pKa of active site Tyr role is filled by Lys165.

The protein belongs to the short-chain dehydrogenases/reductases (SDR) family.

It participates in secondary metabolite biosynthesis. Functionally, short-chain dehydrogenase/reductase, part of the gene cluster that mediates the biosynthesis of melleolides, a range of antifungal and phytotoxic polyketide derivatives composed of an orsellinic acid (OA) moiety esterified to various sesquiterpene alcohols. The first step in melleolides biosynthesis is performed by the delta(6)-protoilludene synthase PRO1 which catalyzes the cyclization of farnesyl diphosphate to protoilludene. The orsellinic acid synthase armB produces OA by condensing acetyl-CoA with 3 malonyl-CoA units in a three-round chain elongation reaction folowed by a C2-C7 ring closure. ArmB further catalyzes the trans-esterification of OA to the various sesquiterpene alcohols resulting from the hydroxylation of protoilludene. The melleolides cluster also includes 5 cytochrome P450 monooxygenases, 4 NAD(+)-dependent oxidoreductases, one flavin-dependent oxidoreductase, and one O-methyltransferase. The cytochrome P450 monooxygenases may be involved in protoilludene hydroxylation to elaborate melleolides with multiple alcohol groups, such as melleolide D, which carries alcohol functionalities at C-4, C-5, C-10, and C-13. The role of the NAD(+)-dependent enzymes remains unknown. Numerous melleolides, including arnamial, show 5'-O-methylation of the aromatic moiety which may be catalyzed by the methyltransferase encoded in the cluster. The flavin-dependent oxidoreductase might represent the dehydrogenase yielding the aldehyde in position 1 of arnamial and other melleolides. Finally, several halogenase localized outside of the cluster, are able to catalyze the transfer of a single chlorine atom to the melleolide backbone, resulting in a 6'-chloromelleolide product. This chain is Short-chain dehydrogenase/reductase ARMGADRAFT_1018421, found in Armillaria gallica (Bulbous honey fungus).